The sequence spans 563 residues: Septation ring formation regulator EzrA (563 aa).

Over M1 to E2 the chain is Extracellular. Residues L3 to F21 form a helical membrane-spanning segment. At R22–S563 the chain is on the cytoplasmic side. 3 coiled-coil regions span residues E133 to H159, K243 to V276, and S309 to F529.

The protein belongs to the EzrA family.

Its subcellular location is the cell membrane. Negative regulator of FtsZ ring formation; modulates the frequency and position of FtsZ ring formation. Inhibits FtsZ ring formation at polar sites. Interacts either with FtsZ or with one of its binding partners to promote depolymerization. This Bacillus velezensis (strain DSM 23117 / BGSC 10A6 / LMG 26770 / FZB42) (Bacillus amyloliquefaciens subsp. plantarum) protein is Septation ring formation regulator EzrA.